We begin with the raw amino-acid sequence, 315 residues long: tRNA dimethylallyltransferase (315 aa).

14-21 (GPTASGKT) provides a ligand contact to ATP. 16–21 (TASGKT) is a binding site for substrate. 3 interaction with substrate tRNA regions span residues 39–42 (DSAL), 163–167 (QRIQR), and 248–253 (RCVGYR).

Belongs to the IPP transferase family. Monomer. Requires Mg(2+) as cofactor.

The catalysed reaction is adenosine(37) in tRNA + dimethylallyl diphosphate = N(6)-dimethylallyladenosine(37) in tRNA + diphosphate. Its function is as follows. Catalyzes the transfer of a dimethylallyl group onto the adenine at position 37 in tRNAs that read codons beginning with uridine, leading to the formation of N6-(dimethylallyl)adenosine (i(6)A). This Paraburkholderia xenovorans (strain LB400) protein is tRNA dimethylallyltransferase.